We begin with the raw amino-acid sequence, 472 residues long: Aspartyl/glutamyl-tRNA(Asn/Gln) amidotransferase subunit B (472 aa).

It belongs to the GatB/GatE family. GatB subfamily. In terms of assembly, heterotrimer of A, B and C subunits.

The enzyme catalyses L-glutamyl-tRNA(Gln) + L-glutamine + ATP + H2O = L-glutaminyl-tRNA(Gln) + L-glutamate + ADP + phosphate + H(+). It carries out the reaction L-aspartyl-tRNA(Asn) + L-glutamine + ATP + H2O = L-asparaginyl-tRNA(Asn) + L-glutamate + ADP + phosphate + 2 H(+). In terms of biological role, allows the formation of correctly charged Asn-tRNA(Asn) or Gln-tRNA(Gln) through the transamidation of misacylated Asp-tRNA(Asn) or Glu-tRNA(Gln) in organisms which lack either or both of asparaginyl-tRNA or glutaminyl-tRNA synthetases. The reaction takes place in the presence of glutamine and ATP through an activated phospho-Asp-tRNA(Asn) or phospho-Glu-tRNA(Gln). This Elusimicrobium minutum (strain Pei191) protein is Aspartyl/glutamyl-tRNA(Asn/Gln) amidotransferase subunit B.